A 346-amino-acid polypeptide reads, in one-letter code: Uroporphyrinogen decarboxylase (346 aa).

Substrate-binding positions include 23-27 (RQAGR), D72, Y149, T204, and H318.

This sequence belongs to the uroporphyrinogen decarboxylase family. In terms of assembly, homodimer.

Its subcellular location is the cytoplasm. It catalyses the reaction uroporphyrinogen III + 4 H(+) = coproporphyrinogen III + 4 CO2. The protein operates within porphyrin-containing compound metabolism; protoporphyrin-IX biosynthesis; coproporphyrinogen-III from 5-aminolevulinate: step 4/4. In terms of biological role, catalyzes the decarboxylation of four acetate groups of uroporphyrinogen-III to yield coproporphyrinogen-III. The chain is Uroporphyrinogen decarboxylase from Synechococcus sp. (strain JA-2-3B'a(2-13)) (Cyanobacteria bacterium Yellowstone B-Prime).